Reading from the N-terminus, the 225-residue chain is PKHD-type hydroxylase YbiX (225 aa).

Residues 78–177 form the Fe2OG dioxygenase domain; it reads TLSTPLFNRY…RVASFMWIQS (100 aa). Residues His-96, Asp-98, and His-158 each coordinate Fe cation. Residue Arg-168 participates in 2-oxoglutarate binding.

Requires Fe(2+) as cofactor. It depends on L-ascorbate as a cofactor.

The chain is PKHD-type hydroxylase YbiX from Shigella boydii serotype 4 (strain Sb227).